The primary structure comprises 232 residues: Uracil-DNA glycosylase (232 aa).

Residue Asp-66 is the Proton acceptor of the active site.

It belongs to the uracil-DNA glycosylase (UDG) superfamily. UNG family.

Its subcellular location is the cytoplasm. The enzyme catalyses Hydrolyzes single-stranded DNA or mismatched double-stranded DNA and polynucleotides, releasing free uracil.. Functionally, excises uracil residues from the DNA which can arise as a result of misincorporation of dUMP residues by DNA polymerase or due to deamination of cytosine. The chain is Uracil-DNA glycosylase from Lactobacillus acidophilus (strain ATCC 700396 / NCK56 / N2 / NCFM).